A 215-amino-acid polypeptide reads, in one-letter code: Redox-sensing transcriptional repressor Rex (215 aa).

A DNA-binding region (H-T-H motif) is located at residues 18-57 (LYYRFLKNLHASGKQRVSSAELSDAVKVDSATIRRDFSYF). Residue 92–97 (GVGNLG) coordinates NAD(+).

Belongs to the transcriptional regulatory Rex family. Homodimer.

Its subcellular location is the cytoplasm. Its function is as follows. Modulates transcription in response to changes in cellular NADH/NAD(+) redox state. This chain is Redox-sensing transcriptional repressor Rex, found in Bacillus licheniformis (strain ATCC 14580 / DSM 13 / JCM 2505 / CCUG 7422 / NBRC 12200 / NCIMB 9375 / NCTC 10341 / NRRL NRS-1264 / Gibson 46).